Consider the following 205-residue polypeptide: Methylthioribulose-1-phosphate dehydratase (205 aa).

Residues H94 and H96 each contribute to the Zn(2+) site.

It belongs to the aldolase class II family. MtnB subfamily. The cofactor is Zn(2+).

It carries out the reaction 5-(methylsulfanyl)-D-ribulose 1-phosphate = 5-methylsulfanyl-2,3-dioxopentyl phosphate + H2O. Its pathway is amino-acid biosynthesis; L-methionine biosynthesis via salvage pathway; L-methionine from S-methyl-5-thio-alpha-D-ribose 1-phosphate: step 2/6. Catalyzes the dehydration of methylthioribulose-1-phosphate (MTRu-1-P) into 2,3-diketo-5-methylthiopentyl-1-phosphate (DK-MTP-1-P). In Pectobacterium atrosepticum (strain SCRI 1043 / ATCC BAA-672) (Erwinia carotovora subsp. atroseptica), this protein is Methylthioribulose-1-phosphate dehydratase.